The sequence spans 611 residues: Oligoendopeptidase F homolog (611 aa).

A Zn(2+)-binding site is contributed by His384. Residue Glu385 is part of the active site. Residues His388 and His391 each contribute to the Zn(2+) site.

This sequence belongs to the peptidase M3B family. The cofactor is Zn(2+).

This Mycoplasma pneumoniae (strain ATCC 29342 / M129 / Subtype 1) (Mycoplasmoides pneumoniae) protein is Oligoendopeptidase F homolog (pepF).